A 230-amino-acid chain; its full sequence is MQLSTNKPDLQEMFDSLAPKYDRINSILSLGMHHLWNRKFSKMLGKSECLLDLCSGTGKVAYRYIHDYPKSQAILVDFSSNMLAIAKQRYPKAPFTFIEGDIAQLPIDQESHTLAAISYGLRNLPDRKNALNEIHRILKPNGCLGILELTSPSDNHPMYLAHRLYLKFLVPLIGRLCSKNKQAYHYLAESIKNLPKDDYLEQLFKDAQFQISKKRKFAFGAATIWILQKI.

Residues T57, D77, D101–I102, and S118 each bind S-adenosyl-L-methionine.

Belongs to the class I-like SAM-binding methyltransferase superfamily. MenG/UbiE family.

It catalyses the reaction a 2-demethylmenaquinol + S-adenosyl-L-methionine = a menaquinol + S-adenosyl-L-homocysteine + H(+). It functions in the pathway quinol/quinone metabolism; menaquinone biosynthesis; menaquinol from 1,4-dihydroxy-2-naphthoate: step 2/2. Functionally, methyltransferase required for the conversion of demethylmenaquinol (DMKH2) to menaquinol (MKH2). The polypeptide is Demethylmenaquinone methyltransferase (Chlamydia caviae (strain ATCC VR-813 / DSM 19441 / 03DC25 / GPIC) (Chlamydophila caviae)).